A 225-amino-acid chain; its full sequence is uncharacterized protein (225 aa).

This is an uncharacterized protein from Dictyostelium discoideum (Social amoeba).